We begin with the raw amino-acid sequence, 1293 residues long: Receptor-type tyrosine-protein phosphatase C (1293 aa).

The first 25 residues, 1-25 (MTMGLWLKLLAFGFALLDTEVFVTG), serve as a signal peptide directing secretion. The Extracellular portion of the chain corresponds to 26-566 (QTPTPSDELS…RNESTNFNAK (541 aa)). A disordered region spans residues 43–174 (LPQSDPLPAR…STTDISSGAS (132 aa)). Polar residues-rich tracts occupy residues 53-72 (TTESTPPSISERGNGSSETT), 88-110 (QPDSQTPSAGGADTQTFSSQADN), and 149-169 (LARNSSAASPTHTSNVSTTDI). Asn-66 carries N-linked (GlcNAc...) asparagine glycosylation. N-linked (GlcNAc...) asparagine glycans are attached at residues Asn-152, Asn-163, Asn-209, Asn-213, Asn-220, Asn-255, Asn-260, Asn-292, Asn-313, Asn-324, Asn-349, Asn-418, Asn-429, Asn-459, and Asn-491. Fibronectin type-III domains are found at residues 376–472 (IPET…TKAD) and 473–568 (RPDK…AKAL). Residues 567-588 (ALIIFLVFLIIVTSIALLVVLY) form a helical membrane-spanning segment. At 589–1293 (KIYDLRKKRS…SASPAPTQSS (705 aa)) the chain is on the cytoplasmic side. Tyrosine-protein phosphatase domains lie at 642 to 901 (FLAE…LVEY) and 933 to 1216 (LEAE…IASI). Tyr-672 carries the phosphotyrosine modification. Substrate is bound by residues Asp-810, 842 to 848 (CSAGVGR), and Gln-886. The active-site Phosphocysteine intermediate is the Cys-842. Residues Ser-964, Ser-983, Ser-986, Ser-990, Ser-993, Ser-994, and Ser-998 each carry the phosphoserine modification. Residues 980–1003 (LEMSKESEPESDESSDDDSDSEET) form a disordered region. Acidic residues predominate over residues 988-1001 (PESDESSDDDSDSE). Cys-1157 serves as the catalytic Phosphocysteine intermediate. Ser-1229 bears the Phosphoserine mark. A disordered region spans residues 1240–1293 (DGGKQDANCVRPDGPLNKAQEDSRGVGTPEPTNSAEEPEHAANGSASPAPTQSS). Thr-1267 is modified (phosphothreonine). Residues 1283 to 1293 (GSASPAPTQSS) show a composition bias toward polar residues. The residue at position 1286 (Ser-1286) is a Phosphoserine.

It belongs to the protein-tyrosine phosphatase family. Receptor class 1/6 subfamily. In terms of assembly, interacts with SKAP1. Interacts with DPP4; the interaction is enhanced in an interleukin-12-dependent manner in activated lymphocytes. Binds GANAB and PRKCSH. Interacts with CD53; this interaction stabilizes PTPRC on the membrane and is required for optimal phosphatase activity. Interacts with CLEC10A. In terms of processing, heavily N- and O-glycosylated.

It localises to the cell membrane. Its subcellular location is the membrane raft. The protein resides in the synapse. The enzyme catalyses O-phospho-L-tyrosyl-[protein] + H2O = L-tyrosyl-[protein] + phosphate. In terms of biological role, protein tyrosine-protein phosphatase required for T-cell activation through the antigen receptor. Acts as a positive regulator of T-cell coactivation upon binding to DPP4. The first PTPase domain has enzymatic activity, while the second one seems to affect the substrate specificity of the first one. Upon T-cell activation, recruits and dephosphorylates SKAP1 and FYN. Dephosphorylates LYN, and thereby modulates LYN activity. Interacts with CLEC10A at antigen presenting cell-T cell contact; CLEC10A on immature dendritic cells recognizes Tn antigen-carrying PTPRC/CD45 receptor on effector T cells and modulates T cell activation threshold to limit autoreactivity. This Mus musculus (Mouse) protein is Receptor-type tyrosine-protein phosphatase C.